Consider the following 386-residue polypeptide: S-adenosylmethionine:tRNA ribosyltransferase-isomerase (386 aa).

It belongs to the QueA family. Monomer.

It localises to the cytoplasm. It carries out the reaction 7-aminomethyl-7-carbaguanosine(34) in tRNA + S-adenosyl-L-methionine = epoxyqueuosine(34) in tRNA + adenine + L-methionine + 2 H(+). The protein operates within tRNA modification; tRNA-queuosine biosynthesis. Its function is as follows. Transfers and isomerizes the ribose moiety from AdoMet to the 7-aminomethyl group of 7-deazaguanine (preQ1-tRNA) to give epoxyqueuosine (oQ-tRNA). In Rickettsia canadensis (strain McKiel), this protein is S-adenosylmethionine:tRNA ribosyltransferase-isomerase.